The chain runs to 377 residues: Subtilisin-like protease CPC735_012930 (377 aa).

Positions Met-1 to Ala-20 are cleaved as a signal peptide. The propeptide occupies Gly-21–Thr-118. The 79-residue stretch at Ser-36 to Met-114 folds into the Inhibitor I9 domain. In terms of domain architecture, Peptidase S8 spans Ser-128–Phe-377. Catalysis depends on charge relay system residues Asp-160 and His-191. N-linked (GlcNAc...) asparagine glycosylation is present at Asn-252. Residue Ser-323 is the Charge relay system of the active site. Residues Asn-364 and Asn-373 are each glycosylated (N-linked (GlcNAc...) asparagine).

This sequence belongs to the peptidase S8 family.

The protein resides in the secreted. Functionally, secreted subtilisin-like serine protease with keratinolytic activity that contributes to pathogenicity. This is Subtilisin-like protease CPC735_012930 from Coccidioides posadasii (strain C735) (Valley fever fungus).